Consider the following 601-residue polypeptide: Invasin CotH3 (601 aa).

The N-terminal stretch at M1–A17 is a signal peptide. Residues N28, N85, N170, N324, N449, N527, N541, N554, N561, and N571 are each glycosylated (N-linked (GlcNAc...) asparagine). Over residues S539–S579 the composition is skewed to low complexity. Residues S539–A581 form a disordered region. A lipid anchor (GPI-anchor amidated serine) is attached at S579. Residues G580–F601 constitute a propeptide, removed in mature form.

In terms of assembly, interacts with HSPA5/BiP on the cell surface of host nasal epithelial cells.

The protein localises to the cell membrane. Functionally, promotes invasion of host epithelial cells by adhering to receptors on the host cell surface to facilitate endocytosis of the pathogen into host cells. Binds HSPA5/BiP protein on the cell surface of host nasal epithelial cells. This Rhizopus delemar (strain RA 99-880 / ATCC MYA-4621 / FGSC 9543 / NRRL 43880) (Mucormycosis agent) protein is Invasin CotH3.